A 604-amino-acid chain; its full sequence is Zinc finger protein chinmo (604 aa).

A BTB domain is found at Ala32–Gln98. Disordered regions lie at residues Arg122 to Ser155, Cys291 to His310, Arg330 to Thr437, and Asn450 to Thr470. Over residues Pro364–Thr374 the composition is skewed to low complexity. Positions Ala384 to Leu409 are enriched in polar residues. Positions Ala425 to Thr437 are enriched in acidic residues. The segment covering Ser461–Thr470 has biased composition (low complexity). 2 C2H2-type zinc fingers span residues Leu517 to His540 and Val545 to His568.

As to expression, broadly expressed in the developing larval central nervous system (at protein level). Expressed in the larval lymph gland and circulating hemocytes (at protein level). Expressed in all cell types of the adult testis stem cell niche but not detected in somatic cells of the adult ovary (at protein level). In the testis, expressed at high levels in cyst stem cells and early cyst cells and, at lower levels, in germline stem cells (at protein level).

It is found in the nucleus. Its function is as follows. Required for morphological differentiation of postmitotic neurons during postembryonic brain development. Ensures production of appropriate neuron subtypes within a lineage by preventing precocious generation of late neuronal types of that lineage. Acts as a downstream mediator of the transcriptional activator Stat92e and is required for the development of the eye-antennal disk which gives rise to the adult eye, antenna and head capsule, for transcriptional repression of the Notch receptor ligand Ser and for the self-renewal of cyst stem cells in the testis. In the adult testis, maintains the male identify of adult somatic cyst stem cells. Represses expression and alternative splicing of transformer pre-mRNA, resulting in the production of the male-specific isoform of transcription factor dsx which ensures male-specific transcription of target genes. Plays a role in actin nuclear localization through its involvement in repressing the expression of the kinase Cdi. This maintains the cofilin/actin-depolymerizing factor homolog tsr in its unphosphorylated state which is required for actin nuclear import. This chain is Zinc finger protein chinmo, found in Drosophila melanogaster (Fruit fly).